Here is a 325-residue protein sequence, read N- to C-terminus: LIM and senescent cell antigen-like-containing domain protein 1 (325 aa).

Residue A2 is modified to N-acetylalanine. LIM zinc-binding domains lie at 10 to 62 (CERC…CEHD), 71 to 121 (CHQC…CRPC), 135 to 184 (CQKC…CLPC), 193 to 243 (CGAC…CETH), and 252 to 303 (CFHC…CKKC).

Component of the heterotrimeric IPP (ILK-PINCH-PARVIN) complex composed of ILK, LIMS1/PINCH and PARVA; the complex binds to F-actin via the C-terminal tail of LIMS1 and the N-terminal region of PARVA, promoting F-actin filament bundling. Formation of the IPP complex is dependent on protein kinase C and precedes integrin-mediated cell adhesion and spreading. Competes with LIMS2 for interaction with ILK. Interacts with SH3/SH2 adapter NCK2, thereby linking the complex to cell surface receptors. Interacts (via LIM zinc-binding 5) with TGFB1I1.

It localises to the cell junction. The protein resides in the focal adhesion. Its subcellular location is the cell membrane. Its function is as follows. Within the IPP (ILK-PINCH-PARVIN) complex, binds to F-actin, promoting F-actin bundling, a process required to generate force for actin cytoskeleton reorganization and subsequent dynamic cell adhesion events such as cell spreading and migration. The protein is LIM and senescent cell antigen-like-containing domain protein 1 (Lims1) of Mus musculus (Mouse).